Reading from the N-terminus, the 1090-residue chain is Exocyst complex component SEC5A (1090 aa).

Positions 18–128 are disordered; the sequence is LKEQAKRDLT…ARKEDDGAWD (111 aa). Low complexity predominate over residues 45 to 69; sequence QQPRQQKPVAAAAAPPKKSAAAVRK. Over residues 109–124 the composition is skewed to basic and acidic residues; the sequence is RGSDVREKGRARKEDD. Residue Ser-180 is modified to Phosphoserine. 3 disordered regions span residues 759-783, 987-1010, and 1046-1090; these read TSRQDNWKNGYSDEHQEEPSANTYG, VETPGHNRRPTRGSEDTVSDDKQS, and APLE…PRRR. The span at 998-1009 shows a compositional bias: basic and acidic residues; the sequence is RGSEDTVSDDKQ. Positions 1058 to 1082 are enriched in polar residues; that stretch reads TYSSFRGSMDSPSRNYRGSQSSGSP.

The protein belongs to the SEC5 family. The exocyst complex is composed of SEC3, SEC5, SEC6, SEC8, SEC10, EXO70A1 and EXO84B. Interacts with SEC3A and EXO70B1. Binds to EXO70H1 and EXO70B2. Binds directly to B1L.

It is found in the cytoplasm. It localises to the cytosol. Its subcellular location is the secreted. The protein resides in the extracellular exosome. Functionally, component of the exocyst complex involved in the docking of exocytic vesicles with fusion sites on the plasma membrane during regulated or polarized secretion. Involved in polarized cell growth and organ morphogenesis. During cytokinesis, involved in cell plate initiation, cell plate maturation and formation of new primary cell wall. Probable component of an exocyst subcomplex specifically involved in autophagy-related, Golgi-independent membrane traffic to the vacuole. Regulates autophagosome formation and autophagy-related Golgi-independent import into the vacuole. This Arabidopsis thaliana (Mouse-ear cress) protein is Exocyst complex component SEC5A.